Consider the following 128-residue polypeptide: Holin-like protein CidA (128 aa).

Helical transmembrane passes span 4–24 (LLLT…INWV), 26–46 (ALLH…FTLL), 59–79 (GAAW…VGVI), and 88–108 (FGVS…VSTG).

It belongs to the CidA/LrgA family. CidA subfamily.

The protein resides in the cell membrane. Increases the activity of extracellular murein hydrolases possibly by mediating their export via hole formation. Inhibited by the antiholin-like proteins LrgAB. In an unstressed cell, the LrgAB products probably inhibit the function of the CidA protein. When a cell is stressed by the addition of antibiotics or by other factors in the environment, CidA possibly oligomerizes within the bacterial cell membrane, creating lesions that disrupt the proton motive force, which in turn results in loss of cell viability. These lesions are also hypothesized to regulate the subsequent cell lysis by either allowing the murein hydrolases access to the cell wall substrate and/or regulating their activity by a possible change in the cell wall pH that results from loss of membrane potential. The chain is Holin-like protein CidA from Bacillus subtilis (strain 168).